The chain runs to 570 residues: Fibropellin-3 (570 aa).

An N-terminal signal peptide occupies residues 1–17 (MKVSLLAVLLLSIVAAT). Residues 18–55 (YGQGECGSNPCENGSVCRDGEGTYICECQMGYDGQNCD) form the EGF-like 1 domain. Intrachain disulfides connect cysteine 23-cysteine 34, cysteine 28-cysteine 43, cysteine 45-cysteine 54, and cysteine 62-cysteine 88. The N-linked (GlcNAc...) asparagine glycan is linked to asparagine 30. Residues 62–175 (CGYNIFESTG…RKGFRITFSS (114 aa)) enclose the CUB domain. N-linked (GlcNAc...) asparagine glycosylation is present at asparagine 136. The region spanning 176-212 (DGDDCTPNPCLNGATCVDQVNDYQCICAPGFTGDNCE) is the EGF-like 2; calcium-binding domain. 22 disulfides stabilise this stretch: cysteine 180/cysteine 191, cysteine 185/cysteine 200, cysteine 202/cysteine 211, cysteine 218/cysteine 229, cysteine 223/cysteine 238, cysteine 240/cysteine 249, cysteine 256/cysteine 267, cysteine 261/cysteine 276, cysteine 278/cysteine 287, cysteine 294/cysteine 305, cysteine 299/cysteine 314, cysteine 316/cysteine 325, cysteine 332/cysteine 343, cysteine 337/cysteine 352, cysteine 354/cysteine 363, cysteine 370/cysteine 381, cysteine 375/cysteine 390, cysteine 392/cysteine 401, cysteine 408/cysteine 419, cysteine 413/cysteine 428, cysteine 430/cysteine 439, and cysteine 445/cysteine 521. Residues 214 to 250 (DIDECASAPCRNGGACVDQVNGYTCNCIPGFNGVNCE) enclose the EGF-like 3; calcium-binding domain. The EGF-like 4; calcium-binding domain occupies 252-288 (NINECASIPCLNGGICVDGINQFACTCLPGYTGILCE). In terms of domain architecture, EGF-like 5; calcium-binding spans 290 to 326 (DINECASSPCQNGGSCTDAVNRYTCDCRAGFTGSNCE). An EGF-like 6; calcium-binding domain is found at 328–364 (NINECASSPCLNGGSCLDGVDGYVCQCLPNYTGTHCE). A glycan (N-linked (GlcNAc...) asparagine) is linked at asparagine 357. The EGF-like 7 domain maps to 366–402 (SLDACASLPCQNGGVCTNVGGDYVCECLPGYTGINCE). The EGF-like 8; calcium-binding domain occupies 404 to 440 (DINECASLPCQNGGECINGIAMYICQCRQGYAGVNCE). The Avidin-like domain maps to 443–562 (GFCDLEGVWF…GQDKWTRYEQ (120 aa)).

In terms of assembly, homotetramer.

The protein resides in the secreted. Its subcellular location is the extracellular space. Its function is as follows. Forms the apical lamina, a component of the extracellular matrix. The protein is Fibropellin-3 (EGF3) of Strongylocentrotus purpuratus (Purple sea urchin).